The following is a 174-amino-acid chain: RNA pyrophosphohydrolase (174 aa).

The 144-residue stretch at 6–149 (GYRPNVGIIL…KRDVYLGALK (144 aa)) folds into the Nudix hydrolase domain. The Nudix box signature appears at 38 to 59 (GGIKPGESPETAMYRELYEEVG).

The protein belongs to the Nudix hydrolase family. RppH subfamily. The cofactor is a divalent metal cation.

Accelerates the degradation of transcripts by removing pyrophosphate from the 5'-end of triphosphorylated RNA, leading to a more labile monophosphorylated state that can stimulate subsequent ribonuclease cleavage. This chain is RNA pyrophosphohydrolase, found in Neisseria meningitidis serogroup B (strain ATCC BAA-335 / MC58).